The sequence spans 874 residues: Alanine--tRNA ligase (874 aa).

The Zn(2+) site is built by H562, H566, C665, and H669.

It belongs to the class-II aminoacyl-tRNA synthetase family. Zn(2+) is required as a cofactor.

It is found in the cytoplasm. It carries out the reaction tRNA(Ala) + L-alanine + ATP = L-alanyl-tRNA(Ala) + AMP + diphosphate. Functionally, catalyzes the attachment of alanine to tRNA(Ala) in a two-step reaction: alanine is first activated by ATP to form Ala-AMP and then transferred to the acceptor end of tRNA(Ala). Also edits incorrectly charged Ser-tRNA(Ala) and Gly-tRNA(Ala) via its editing domain. The protein is Alanine--tRNA ligase of Pseudomonas putida (strain W619).